The primary structure comprises 138 residues: Small ribosomal subunit protein uS11c (138 aa).

This sequence belongs to the universal ribosomal protein uS11 family. As to quaternary structure, part of the 30S ribosomal subunit.

The protein localises to the plastid. The protein resides in the chloroplast. The sequence is that of Small ribosomal subunit protein uS11c from Illicium oligandrum (Star anise).